The following is a 371-amino-acid chain: Mannose-1-phosphate guanylyltransferase catalytic subunit beta (371 aa).

Residues 14–233 (RALILVGGYG…TGFWMDIGQP (220 aa)) are substrate-binding domain. Asp-122 contacts GDP-alpha-D-mannose. Asp-122 provides a ligand contact to Mg(2+). Lys-173 is a catalytic residue. GDP-alpha-D-mannose is bound at residue Asp-229. Residue Asp-229 participates in Mg(2+) binding. The tract at residues 256 to 371 (YTGPGVVGNV…ASVPEPQIIM (116 aa)) is hexapeptide repeat domain.

Belongs to the transferase hexapeptide repeat family. In terms of assembly, component of the GMPPA-GMPPB mannose-1-phosphate guanylyltransferase complex composed of 4 Gmppa subunits and 8 Gmppb subunits; the complex is organized into three layers, a central layer made up of 2 Gmppa dimers sandwiched between two layers each made up of 2 Gmppb dimers. Gmppb catalytic activity is reduced when part of the complex and binding of GDP-alpha-D-Mannose by Gmppa induces allosteric feedback inhibition of Gmppb. Mg(2+) is required as a cofactor.

It catalyses the reaction alpha-D-mannose 1-phosphate + GTP + H(+) = GDP-alpha-D-mannose + diphosphate. It participates in nucleotide-sugar biosynthesis; GDP-alpha-D-mannose biosynthesis; GDP-alpha-D-mannose from alpha-D-mannose 1-phosphate (GTP route): step 1/1. Its activity is regulated as follows. Enzyme activity is reduced by incorporation into the GMPPA-GMPPB mannose-1-phosphate guanylyltransferase complex. Allosterically inhibited, when part of the GMPPA-GMPPB complex, by GDP-alpha-D-mannose binding to Gmppa. Its function is as follows. Catalytic subunit of the GMPPA-GMPPB mannose-1-phosphate guanylyltransferase complex. Catalyzes the formation of GDP-mannose, an essential precursor of glycan moieties of glycoproteins and glycolipids. Can catalyze the reverse reaction in vitro. Together with GMPPA regulates GDP-alpha-D-mannose levels. The chain is Mannose-1-phosphate guanylyltransferase catalytic subunit beta from Drosophila pseudoobscura pseudoobscura (Fruit fly).